The following is a 158-amino-acid chain: Putative pre-16S rRNA nuclease (158 aa).

The protein belongs to the YqgF nuclease family.

The protein localises to the cytoplasm. Could be a nuclease involved in processing of the 5'-end of pre-16S rRNA. The chain is Putative pre-16S rRNA nuclease from Acidiphilium cryptum (strain JF-5).